We begin with the raw amino-acid sequence, 220 residues long: Lactate utilization protein C (220 aa).

This sequence belongs to the LutC/YkgG family.

Functionally, is involved in L-lactate degradation and allows cells to grow with lactate as the sole carbon source. This is Lactate utilization protein C from Anoxybacillus flavithermus (strain DSM 21510 / WK1).